The sequence spans 327 residues: ATP-dependent (S)-NAD(P)H-hydrate dehydratase (327 aa).

In terms of domain architecture, YjeF C-terminal spans leucine 11–leucine 313. (6S)-NADPHX-binding positions include glycine 121 and asparagine 174–arginine 180. ATP contacts are provided by residues lysine 209–aspartate 213 and glycine 228–glycine 237. A (6S)-NADPHX-binding site is contributed by aspartate 238.

It belongs to the NnrD/CARKD family. Mg(2+) is required as a cofactor.

Its subcellular location is the cytoplasm. It carries out the reaction (6S)-NADHX + ATP = ADP + phosphate + NADH + H(+). It catalyses the reaction (6S)-NADPHX + ATP = ADP + phosphate + NADPH + H(+). Its function is as follows. Catalyzes the dehydration of the S-form of NAD(P)HX at the expense of ATP, which is converted to ADP. Together with NAD(P)HX epimerase, which catalyzes the epimerization of the S- and R-forms, the enzyme allows the repair of both epimers of NAD(P)HX, a damaged form of NAD(P)H that is a result of enzymatic or heat-dependent hydration. The polypeptide is ATP-dependent (S)-NAD(P)H-hydrate dehydratase (Schizosaccharomyces pombe (strain 972 / ATCC 24843) (Fission yeast)).